Consider the following 512-residue polypeptide: Oryzalexin E synthase (512 aa).

Residues 6 to 26 traverse the membrane as a helical segment; the sequence is SELWMTAVATCMSLLLYLTIL. Cys452 is a binding site for heme.

Belongs to the cytochrome P450 family. It depends on heme as a cofactor.

The protein localises to the membrane. It carries out the reaction ent-sandaracopimaradien-3beta-ol + reduced [NADPH--hemoprotein reductase] + O2 = oryzalexin E + oxidized [NADPH--hemoprotein reductase] + H2O + H(+). Functionally, enzyme of the diterpenoid metabolism involved in the biosynthesis of the oryzalexin class of phytoalexins. Can use ent-sandaracopimaradien and syn-stemodene as substrates, but no activity with syn-stemoden-19-oic acid. Hydroxylates 3-alpha-hydroxy-ent-sandaracopimaradiene at C-9-beta, resulting in a 3-alpha,9-beta-diol corresponding to oryzalexins E. The polypeptide is Oryzalexin E synthase (Oryza sativa subsp. japonica (Rice)).